The sequence spans 200 residues: Large ribosomal subunit protein uL4 (200 aa).

The disordered stretch occupies residues 43–71; that stretch reads RAQKTRAEVSGSGKKPWRQKGTGRARSGD.

Belongs to the universal ribosomal protein uL4 family. In terms of assembly, part of the 50S ribosomal subunit.

Its function is as follows. One of the primary rRNA binding proteins, this protein initially binds near the 5'-end of the 23S rRNA. It is important during the early stages of 50S assembly. It makes multiple contacts with different domains of the 23S rRNA in the assembled 50S subunit and ribosome. Functionally, forms part of the polypeptide exit tunnel. The chain is Large ribosomal subunit protein uL4 from Aggregatibacter actinomycetemcomitans (Actinobacillus actinomycetemcomitans).